A 348-amino-acid polypeptide reads, in one-letter code: MDVHYDADPALIHDKQVAVIGYGSQGHAHALNLHDSGVDVAVGLRPGSSSRPKAEQQGLTVMDIGEAAAWGDVVMLLIPDQHQKDVYEAKIAEHMTPGTALGFGHGFNIHYDRIEPPEAVDVFMVAPKSPGHLVRRTYTDGSGVPCLAAVDQDPSGGAMALAISYADAIGGTHAGVIETTFKDETETDLFGEQAVLCGGSQALIQAGFETLVDAGYPEELAYFECLHELKLIVDLYYEGGLEYMNHSVSDTAEYGGYTRGPRVIDDAVREQMQEILEEVQSGEFADEWIEEYEQGAPQLQEERAALTEHPIEQVGQTLRGMMPWLNGDETSADEDAPDAADTAPASSS.

One can recognise a KARI N-terminal Rossmann domain in the interval 1–179 (MDVHYDADPA…GGTHAGVIET (179 aa)). NADP(+)-binding positions include 22–25 (YGSQ), arginine 45, serine 48, serine 50, and 80–83 (DQHQ). Histidine 105 is an active-site residue. Glycine 131 contributes to the NADP(+) binding site. A KARI C-terminal knotted domain is found at 180–325 (TFKDETETDL…QTLRGMMPWL (146 aa)). Mg(2+) contacts are provided by aspartate 188, glutamate 192, glutamate 224, and glutamate 228. Serine 249 contacts substrate. Residues 323–348 (PWLNGDETSADEDAPDAADTAPASSS) are disordered. Residues 339 to 348 (AADTAPASSS) are compositionally biased toward low complexity.

It belongs to the ketol-acid reductoisomerase family. It depends on Mg(2+) as a cofactor.

The catalysed reaction is (2R)-2,3-dihydroxy-3-methylbutanoate + NADP(+) = (2S)-2-acetolactate + NADPH + H(+). It carries out the reaction (2R,3R)-2,3-dihydroxy-3-methylpentanoate + NADP(+) = (S)-2-ethyl-2-hydroxy-3-oxobutanoate + NADPH + H(+). The protein operates within amino-acid biosynthesis; L-isoleucine biosynthesis; L-isoleucine from 2-oxobutanoate: step 2/4. Its pathway is amino-acid biosynthesis; L-valine biosynthesis; L-valine from pyruvate: step 2/4. Involved in the biosynthesis of branched-chain amino acids (BCAA). Catalyzes an alkyl-migration followed by a ketol-acid reduction of (S)-2-acetolactate (S2AL) to yield (R)-2,3-dihydroxy-isovalerate. In the isomerase reaction, S2AL is rearranged via a Mg-dependent methyl migration to produce 3-hydroxy-3-methyl-2-ketobutyrate (HMKB). In the reductase reaction, this 2-ketoacid undergoes a metal-dependent reduction by NADPH to yield (R)-2,3-dihydroxy-isovalerate. This is Ketol-acid reductoisomerase (NADP(+)) from Salinibacter ruber (strain DSM 13855 / M31).